A 34-amino-acid polypeptide reads, in one-letter code: Photosystem II reaction center protein T (34 aa).

The helical transmembrane segment at A3 to F23 threads the bilayer.

The protein belongs to the PsbT family. PSII is composed of 1 copy each of membrane proteins PsbA, PsbB, PsbC, PsbD, PsbE, PsbF, PsbH, PsbI, PsbJ, PsbK, PsbL, PsbM, PsbT, PsbY, PsbZ, Psb30/Ycf12, at least 3 peripheral proteins of the oxygen-evolving complex and a large number of cofactors. It forms dimeric complexes.

The protein resides in the plastid. The protein localises to the chloroplast thylakoid membrane. Found at the monomer-monomer interface of the photosystem II (PS II) dimer, plays a role in assembly and dimerization of PSII. PSII is a light-driven water plastoquinone oxidoreductase, using light energy to abstract electrons from H(2)O, generating a proton gradient subsequently used for ATP formation. This Solanum lycopersicum (Tomato) protein is Photosystem II reaction center protein T.